Consider the following 182-residue polypeptide: NADH-ubiquinone oxidoreductase 20 kDa subunit (182 aa).

[4Fe-4S] cluster contacts are provided by C57, C58, C122, and C152.

Belongs to the complex I 20 kDa subunit family. It depends on [4Fe-4S] cluster as a cofactor.

It localises to the mitochondrion. It catalyses the reaction a ubiquinone + NADH + 5 H(+)(in) = a ubiquinol + NAD(+) + 4 H(+)(out). In Reclinomonas americana, this protein is NADH-ubiquinone oxidoreductase 20 kDa subunit (NAD10).